We begin with the raw amino-acid sequence, 366 residues long: D-alanine--D-alanine ligase (366 aa).

An ATP-grasp domain is found at 146–352; it reads KICFEHAGLQ…YTELINRLIE (207 aa). 179 to 234 contributes to the ATP binding site; sequence EKKLRYPMFVKPANMGSSVGISKAHNRNELIEAIELALAYDRKFLIEKAINAREME. Residues Asp305, Glu319, and Asn321 each coordinate Mg(2+).

It belongs to the D-alanine--D-alanine ligase family. Mg(2+) serves as cofactor. It depends on Mn(2+) as a cofactor.

The protein resides in the cytoplasm. It carries out the reaction 2 D-alanine + ATP = D-alanyl-D-alanine + ADP + phosphate + H(+). It participates in cell wall biogenesis; peptidoglycan biosynthesis. Cell wall formation. This is D-alanine--D-alanine ligase from Chloroherpeton thalassium (strain ATCC 35110 / GB-78).